The chain runs to 461 residues: Vitamin K-dependent protein C (461 aa).

A signal peptide spans 1–18 (MWQFRIFLLFASTWGISG). Residues 19–41 (VSAHPDPVFSSSEGAHQVLRVRR) constitute a propeptide that is removed on maturation. The Gla domain occupies 42-87 (ANSFLEEVRAGSLERECMEEICDFEEAQEIFQNVEDTLAFWIKYFD). A 4-carboxyglutamate mark is found at glutamate 47, glutamate 48, glutamate 55, glutamate 57, glutamate 60, glutamate 61, glutamate 66, glutamate 67, glutamate 70, and glutamate 76. Cysteine 58 and cysteine 63 are oxidised to a cystine. 9 cysteine pairs are disulfide-bonded: cysteine 91/cysteine 110, cysteine 100/cysteine 105, cysteine 104/cysteine 119, cysteine 121/cysteine 130, cysteine 139/cysteine 150, cysteine 146/cysteine 159, cysteine 161/cysteine 174, cysteine 182/cysteine 320, and cysteine 239/cysteine 255. 2 consecutive EGF-like domains span residues 96 to 131 (LDHQCDSPCCGHGTCIDGLGGFSCSCDKGWEGRFCQ) and 135 to 175 (GFQD…MHCR). Aspartate 112 is subject to (3R)-3-hydroxyaspartate. The region spanning 213–450 (IVNGTLTKQG…YLKWIHSYIG (238 aa)) is the Peptidase S1 domain. An N-linked (GlcNAc...) asparagine glycan is attached at asparagine 215. Histidine 254 (charge relay system) is an active-site residue. Asparagine 291 is a glycosylation site (N-linked (GlcNAc...) asparagine). Aspartate 300 (charge relay system) is an active-site residue. Asparagine 355 carries an N-linked (GlcNAc...) asparagine glycan. 2 cysteine pairs are disulfide-bonded: cysteine 373–cysteine 387 and cysteine 398–cysteine 426. The active-site Charge relay system is serine 402.

Belongs to the peptidase S1 family. In terms of assembly, synthesized as a single chain precursor, which is cleaved into a light chain and a heavy chain held together by a disulfide bond. The enzyme is then activated by thrombin, which cleaves a tetradecapeptide from the amino end of the heavy chain; this reaction, which occurs at the surface of endothelial cells, is strongly promoted by thrombomodulin. In terms of processing, the vitamin K-dependent, enzymatic carboxylation of some Glu residues allows the modified protein to bind calcium. The iron and 2-oxoglutarate dependent 3-hydroxylation of aspartate and asparagine is (R) stereospecific within EGF domains. As to expression, plasma; synthesized in the liver.

The protein resides in the secreted. Its subcellular location is the golgi apparatus. It is found in the endoplasmic reticulum. It carries out the reaction Degradation of blood coagulation factors Va and VIIIa.. In terms of biological role, protein C is a vitamin K-dependent serine protease that regulates blood coagulation by inactivating factors Va and VIIIa in the presence of calcium ions and phospholipids. Exerts a protective effect on the endothelial cell barrier function. The polypeptide is Vitamin K-dependent protein C (Proc) (Rattus norvegicus (Rat)).